A 224-amino-acid polypeptide reads, in one-letter code: Ribose-5-phosphate isomerase A (224 aa).

Substrate contacts are provided by residues 32-35 (TGST), 85-88 (DGAD), and 98-101 (KGGG). Residue E107 is the Proton acceptor of the active site. Position 125 (K125) interacts with substrate.

This sequence belongs to the ribose 5-phosphate isomerase family. In terms of assembly, homodimer.

The catalysed reaction is aldehydo-D-ribose 5-phosphate = D-ribulose 5-phosphate. It functions in the pathway carbohydrate degradation; pentose phosphate pathway; D-ribose 5-phosphate from D-ribulose 5-phosphate (non-oxidative stage): step 1/1. Functionally, catalyzes the reversible conversion of ribose-5-phosphate to ribulose 5-phosphate. This is Ribose-5-phosphate isomerase A from Pseudomonas putida (strain ATCC 700007 / DSM 6899 / JCM 31910 / BCRC 17059 / LMG 24140 / F1).